Here is a 186-residue protein sequence, read N- to C-terminus: Adrenodoxin, mitochondrial (186 aa).

The N-terminal 58 residues, 1–58, are a transit peptide targeting the mitochondrion; the sequence is MAVRLLRVASAALGDTAVRWQPLVGPRAGNRGPGGSIWLGLGGRAAAARTLSLSARAW. Serine 61 is subject to Phosphoserine. Lysine 64 carries the post-translational modification N6-acetyllysine; alternate. The residue at position 64 (lysine 64) is an N6-succinyllysine; alternate. The 2Fe-2S ferredoxin-type domain maps to 65–169; it reads ITVHFINRDG…NMTVRVPEAV (105 aa). [2Fe-2S] cluster-binding residues include cysteine 104, cysteine 110, cysteine 113, and cysteine 150. The residue at position 156 (lysine 156) is an N6-succinyllysine. A Phosphoserine modification is found at serine 175.

Belongs to the adrenodoxin/putidaredoxin family. Interacts with CYP11A1. Requires [2Fe-2S] cluster as cofactor.

It localises to the mitochondrion matrix. Essential for the synthesis of various steroid hormones. Participates in the reduction of mitochondrial cytochrome P450 for steroidogenesis. Transfers electrons from adrenodoxin reductase to CYP11A1, a cytochrome P450 that catalyzes cholesterol side-chain cleavage. Does not form a ternary complex with adrenodoxin reductase and CYP11A1 but shuttles between the two enzymes to transfer electrons. The chain is Adrenodoxin, mitochondrial (FDX1) from Sus scrofa (Pig).